A 180-amino-acid chain; its full sequence is Large ribosomal subunit protein uL5 (180 aa).

The protein belongs to the universal ribosomal protein uL5 family. As to quaternary structure, part of the 50S ribosomal subunit; part of the 5S rRNA/L5/L18/L25 subcomplex. Contacts the 5S rRNA and the P site tRNA. Forms a bridge to the 30S subunit in the 70S ribosome.

In terms of biological role, this is one of the proteins that bind and probably mediate the attachment of the 5S RNA into the large ribosomal subunit, where it forms part of the central protuberance. In the 70S ribosome it contacts protein S13 of the 30S subunit (bridge B1b), connecting the 2 subunits; this bridge is implicated in subunit movement. Contacts the P site tRNA; the 5S rRNA and some of its associated proteins might help stabilize positioning of ribosome-bound tRNAs. The polypeptide is Large ribosomal subunit protein uL5 (Lactobacillus acidophilus (strain ATCC 700396 / NCK56 / N2 / NCFM)).